The following is a 405-amino-acid chain: Insertion element IS110 uncharacterized 43.6 kDa protein (405 aa).

This Streptomyces coelicolor (strain ATCC BAA-471 / A3(2) / M145) protein is Insertion element IS110 uncharacterized 43.6 kDa protein.